We begin with the raw amino-acid sequence, 627 residues long: WPP domain-interacting tail-anchored protein 2 (627 aa).

Coiled-coil stretches lie at residues 81–152 (CGIL…RRTL), 188–218 (LEKS…KLHY), and 312–542 (TLRE…KILR). Residues 577 to 597 (SLQEDERTREEPEKQSVSEKS) form a disordered region. The segment covering 580 to 597 (EDERTREEPEKQSVSEKS) has biased composition (basic and acidic residues). A helical transmembrane segment spans residues 606–626 (LKHILVVALVFVLFCSFFGVT).

In terms of assembly, component of Ran complexes at least composed of WIT1 or WIT2, RANGAP1 or RANGAP2, and WIP1 or WIP2 or WIP3. Interacts with KAKU1. Core component of the LINC complex which is composed of inner nuclear membrane SUN domain-containing proteins coupled to outer nuclear membrane WIP and WIT proteins. The LINC complex also involves nucleoskeletal proteins CRWN/LINC and possibly KAKU4 and the cytoskeletal myosin KAKU1. Interacts with WIP1, WIP2 and WIP3. As to expression, ubiquitous.

The protein resides in the membrane. Its function is as follows. Together with WIT1, required for the nuclear envelope docking of RANGAP proteins in root tips. Plays a role in nuclear shape determination. As component of the SUN-WIP-WIT2-KAKU1 complex, mediates the transfer of cytoplasmic forces to the nuclear envelope (NE), leading to nuclear shape changes. The protein is WPP domain-interacting tail-anchored protein 2 (WIT2) of Arabidopsis thaliana (Mouse-ear cress).